The sequence spans 520 residues: MAYFNQHQSMISKRYLTFFSKSKKKKPFSTGQLIGLILGPLLFLLTLLFFHPQDLPWKGVYVLAITLWIATWWITEAIPIAATSLLPIVLLPLGHILTPEQVSSEYGNDIIFLFLGGFILAIAMERWNLHTRVALTIINLIGASTSKILLGFMVATGFLSMFVSNTAAVMIMIPIGLAIIKEAHDLQEANTNQTSIQKFEKSLVLAIGYAGTIGGLGTLIGTPPLIILKGQYMQHFGHEISFAKWMIVGIPTVIVLLGITWLYLRYVAFRHDLKYLPGGQTLIKQKLDELGKMKYEEKVVQTIFVLASLLWITREFLLKKWEVTSSVADGTIAIFISILLFIIPAKNTEKHRRIIDWEVAKELPWGVLILFGGGLALAKGISESGLAKWLGEQLKSLNGVSPILIVIVITIFVLFLTEVTSNTATATMILPILATLSVAVGVHPLLLMAPAAMAANCAYMLPVGTPPNAIIFGSGKISIKQMASVGFWVNLISAIIIILVVYYIMPIVLGIDINQPLPLK.

14 helical membrane passes run 30–50, 55–75, 77–97, 104–124, 160–180, 207–227, 242–262, 298–318, 323–343, 362–382, 399–419, 428–448, 452–472, and 491–511; these read TGQLIGLILGPLLFLLTLLFF, LPWKGVYVLAITLWIATWWIT, AIPIAATSLLPIVLLPLGHIL, SEYGNDIIFLFLGGFILAIAM, SMFVSNTAAVMIMIPIGLAII, IGYAGTIGGLGTLIGTPPLII, FAKWMIVGIPTVIVLLGITWL, KVVQTIFVLASLLWITREFLL, VTSSVADGTIAIFISILLFII, ELPWGVLILFGGGLALAKGIS, GVSPILIVIVITIFVLFLTEV, MILPILATLSVAVGVHPLLLM, AMAANCAYMLPVGTPPNAIIF, and LISAIIIILVVYYIMPIVLGI.

It belongs to the SLC13A/DASS transporter (TC 2.A.47) family. NADC subfamily.

It is found in the cell membrane. Its function is as follows. Mediates the transport of the dicarboxylates fumarate, malate, and succinate across the cytoplasmic membrane via a Na(+)-electrochemical gradient. The sequence is that of Sodium-dependent dicarboxylate transporter SdcS (sdcS) from Staphylococcus aureus (strain MRSA252).